The primary structure comprises 250 residues: Heat stress transcription factor C-1b (250 aa).

A coiled-coil region spans residues 129–182 (EEGEEVRGTIEAVQRLREEQRGMEEELQAMDQRLRAAESRPGQMMAFLAKLADE). A hydrophobic repeat HR-A/B region spans residues 144–180 (LREEQRGMEEELQAMDQRLRAAESRPGQMMAFLAKLA). The tract at residues 199-226 (AAGNNGSDPCKRRRIGADTGRGGVATGG) is disordered. Positions 209-212 (KRRR) match the Nuclear localization signal motif.

The protein belongs to the HSF family. Class C subfamily. Homotrimer. Exhibits temperature-dependent phosphorylation.

The protein localises to the nucleus. Transcriptional regulator that specifically binds DNA of heat shock promoter elements (HSE). This Oryza sativa subsp. japonica (Rice) protein is Heat stress transcription factor C-1b (HSFC1B).